The following is a 293-amino-acid chain: Elongation factor Ts (293 aa).

An involved in Mg(2+) ion dislocation from EF-Tu region spans residues 80 to 83; it reads TDFV.

The protein belongs to the EF-Ts family.

The protein resides in the cytoplasm. In terms of biological role, associates with the EF-Tu.GDP complex and induces the exchange of GDP to GTP. It remains bound to the aminoacyl-tRNA.EF-Tu.GTP complex up to the GTP hydrolysis stage on the ribosome. The protein is Elongation factor Ts of Paraburkholderia xenovorans (strain LB400).